The chain runs to 578 residues: Sulfite reductase [NADPH] hemoprotein beta-component (578 aa).

C441, C447, C487, and C491 together coordinate [4Fe-4S] cluster. A siroheme-binding site is contributed by C491.

This sequence belongs to the nitrite and sulfite reductase 4Fe-4S domain family. Alpha(8)-beta(8). The alpha component is a flavoprotein, the beta component is a hemoprotein. Siroheme is required as a cofactor. The cofactor is [4Fe-4S] cluster.

It carries out the reaction hydrogen sulfide + 3 NADP(+) + 3 H2O = sulfite + 3 NADPH + 4 H(+). It participates in sulfur metabolism; hydrogen sulfide biosynthesis; hydrogen sulfide from sulfite (NADPH route): step 1/1. Its function is as follows. Component of the sulfite reductase complex that catalyzes the 6-electron reduction of sulfite to sulfide. This is one of several activities required for the biosynthesis of L-cysteine from sulfate. This is Sulfite reductase [NADPH] hemoprotein beta-component from Vibrio parahaemolyticus serotype O3:K6 (strain RIMD 2210633).